The sequence spans 210 residues: Large ribosomal subunit protein uL3 (210 aa).

A disordered region spans residues 119–143 (GYQGNIKKDGQSRGPMAHGSRYHRR).

It belongs to the universal ribosomal protein uL3 family. Part of the 50S ribosomal subunit. Forms a cluster with proteins L14 and L19.

In terms of biological role, one of the primary rRNA binding proteins, it binds directly near the 3'-end of the 23S rRNA, where it nucleates assembly of the 50S subunit. The sequence is that of Large ribosomal subunit protein uL3 from Lacticaseibacillus casei (strain BL23) (Lactobacillus casei).